The chain runs to 157 residues: DNA gyrase inhibitor (157 aa).

Belongs to the DNA gyrase inhibitor family. Interacts with DNA gyrase.

Its subcellular location is the cytoplasm. Its function is as follows. Inhibits the supercoiling activity of DNA gyrase. Acts by inhibiting DNA gyrase at an early step, prior to (or at the step of) binding of DNA by the gyrase. It protects cells against toxins that target DNA gyrase, by inhibiting activity of these toxins and reducing the formation of lethal double-strand breaks in the cell. This chain is DNA gyrase inhibitor, found in Citrobacter rodentium (strain ICC168) (Citrobacter freundii biotype 4280).